A 903-amino-acid polypeptide reads, in one-letter code: Translation initiation factor IF-2 (903 aa).

A disordered region spans residues 49-314; the sequence is LNREHGSGPD…GSSLQQGFNK (266 aa). Polar residues predominate over residues 68-82; that stretch reads STLNIQGTGGKSKSV. Composition is skewed to basic and acidic residues over residues 93–163 and 174–225; these read VKRD…EAAE and EVSK…ENAT. Positions 265–279 are enriched in basic residues; sequence GRARPAKVARQKKSN. Over residues 280–293 the composition is skewed to basic and acidic residues; that stretch reads KHSESKADREEARA. In terms of domain architecture, tr-type G spans 402–571; the sequence is PRAPVVTIMG…LLQSEVLELK (170 aa). Residues 411–418 are G1; sequence GHVDHGKT. 411 to 418 contributes to the GTP binding site; the sequence is GHVDHGKT. Positions 436 to 440 are G2; sequence GITQH. The interval 457 to 460 is G3; it reads DTPG. GTP is bound by residues 457–461 and 511–514; these read DTPGH and NKID. The tract at residues 511-514 is G4; that stretch reads NKID. The interval 547–549 is G5; that stretch reads SAK.

The protein belongs to the TRAFAC class translation factor GTPase superfamily. Classic translation factor GTPase family. IF-2 subfamily.

It is found in the cytoplasm. In terms of biological role, one of the essential components for the initiation of protein synthesis. Protects formylmethionyl-tRNA from spontaneous hydrolysis and promotes its binding to the 30S ribosomal subunits. Also involved in the hydrolysis of GTP during the formation of the 70S ribosomal complex. The polypeptide is Translation initiation factor IF-2 (Cronobacter sakazakii (strain ATCC BAA-894) (Enterobacter sakazakii)).